A 253-amino-acid polypeptide reads, in one-letter code: 5'-nucleotidase SurE 2 (253 aa).

The a divalent metal cation site is built by Asp8, Asp9, Ser39, and Asn92.

It belongs to the SurE nucleotidase family. A divalent metal cation is required as a cofactor.

The protein localises to the cytoplasm. The catalysed reaction is a ribonucleoside 5'-phosphate + H2O = a ribonucleoside + phosphate. In terms of biological role, nucleotidase that shows phosphatase activity on nucleoside 5'-monophosphates. This chain is 5'-nucleotidase SurE 2, found in Burkholderia lata (strain ATCC 17760 / DSM 23089 / LMG 22485 / NCIMB 9086 / R18194 / 383).